The following is a 202-amino-acid chain: ATP-dependent Clp protease proteolytic subunit 1 (202 aa).

The active-site Nucleophile is Ser101. His126 is a catalytic residue.

The protein belongs to the peptidase S14 family. Fourteen ClpP subunits assemble into 2 heptameric rings which stack back to back to give a disk-like structure with a central cavity, resembling the structure of eukaryotic proteasomes.

Its subcellular location is the cytoplasm. The catalysed reaction is Hydrolysis of proteins to small peptides in the presence of ATP and magnesium. alpha-casein is the usual test substrate. In the absence of ATP, only oligopeptides shorter than five residues are hydrolyzed (such as succinyl-Leu-Tyr-|-NHMec, and Leu-Tyr-Leu-|-Tyr-Trp, in which cleavage of the -Tyr-|-Leu- and -Tyr-|-Trp bonds also occurs).. Its function is as follows. Cleaves peptides in various proteins in a process that requires ATP hydrolysis. Has a chymotrypsin-like activity. Plays a major role in the degradation of misfolded proteins. This Rhizobium etli (strain ATCC 51251 / DSM 11541 / JCM 21823 / NBRC 15573 / CFN 42) protein is ATP-dependent Clp protease proteolytic subunit 1.